Reading from the N-terminus, the 158-residue chain is Protein-export protein SecB (158 aa).

It belongs to the SecB family. As to quaternary structure, homotetramer, a dimer of dimers. One homotetramer interacts with 1 SecA dimer.

It is found in the cytoplasm. Its function is as follows. One of the proteins required for the normal export of preproteins out of the cell cytoplasm. It is a molecular chaperone that binds to a subset of precursor proteins, maintaining them in a translocation-competent state. It also specifically binds to its receptor SecA. The polypeptide is Protein-export protein SecB (Rhodopseudomonas palustris (strain HaA2)).